Here is a 595-residue protein sequence, read N- to C-terminus: Elongation factor 4 (595 aa).

The tr-type G domain maps to 2 to 184 (KNIRNFSIIA…QIVEKIPAPK (183 aa)). Residues 14-19 (DHGKST) and 131-134 (NKID) contribute to the GTP site.

The protein belongs to the TRAFAC class translation factor GTPase superfamily. Classic translation factor GTPase family. LepA subfamily.

The protein resides in the cell inner membrane. The enzyme catalyses GTP + H2O = GDP + phosphate + H(+). In terms of biological role, required for accurate and efficient protein synthesis under certain stress conditions. May act as a fidelity factor of the translation reaction, by catalyzing a one-codon backward translocation of tRNAs on improperly translocated ribosomes. Back-translocation proceeds from a post-translocation (POST) complex to a pre-translocation (PRE) complex, thus giving elongation factor G a second chance to translocate the tRNAs correctly. Binds to ribosomes in a GTP-dependent manner. This Ruthia magnifica subsp. Calyptogena magnifica protein is Elongation factor 4.